Here is a 341-residue protein sequence, read N- to C-terminus: DnaJ homolog subfamily C member 22 (341 aa).

Residues 3-50 enclose the TM2 domain; sequence KGLLVTYALWAVGGPAGLHHLYLGRDSHALLWMLTLGGGGLGWLWEFW. 7 helical membrane passes run 5–25, 30–50, 81–101, 105–125, 135–155, 185–205, and 218–238; these read LLVT…HLYL, HALL…WEFW, FAAQ…SLSS, FYIV…AAVG, LGAA…ILPI, LGLA…CNTA, and FLNW…VLLL. Positions 277-341 constitute a J domain; sequence LAYQVLGLSE…QPRKPRGSRR (65 aa).

The protein localises to the membrane. Its function is as follows. May function as a co-chaperone. In Pongo abelii (Sumatran orangutan), this protein is DnaJ homolog subfamily C member 22 (DNAJC22).